The chain runs to 260 residues: Transcription factor SUM-1 (260 aa).

The 52-residue stretch at 112–163 (DKRKAATLRERRRLRKVNEAFEALKRHTCANPNQRLPKVEILRNAIEYIEKL) folds into the bHLH domain. A disordered region spans residues 171–208 (KANGDSEMDSAETSSNTSDAMTDGSSPGSYSSDKAQQY). The span at 181–205 (AETSSNTSDAMTDGSSPGSYSSDKA) shows a compositional bias: polar residues.

In terms of assembly, efficient DNA binding requires dimerization with another bHLH protein. Homodimer, and heterodimer with the ubiquitous bHLH protein E12.

The protein localises to the nucleus. Functionally, regulatory factor during embryogenesis. Conversion of pluripotent secondary mesenchyme cells to myogenic cells. It binds to the MCK enhancer element. The protein is Transcription factor SUM-1 (SUM-1) of Lytechinus variegatus (Green sea urchin).